The chain runs to 299 residues: ATP phosphoribosyltransferase (299 aa).

Belongs to the ATP phosphoribosyltransferase family. Long subfamily. Mg(2+) is required as a cofactor.

The protein localises to the cytoplasm. The enzyme catalyses 1-(5-phospho-beta-D-ribosyl)-ATP + diphosphate = 5-phospho-alpha-D-ribose 1-diphosphate + ATP. The protein operates within amino-acid biosynthesis; L-histidine biosynthesis; L-histidine from 5-phospho-alpha-D-ribose 1-diphosphate: step 1/9. Its activity is regulated as follows. Feedback inhibited by histidine. Catalyzes the condensation of ATP and 5-phosphoribose 1-diphosphate to form N'-(5'-phosphoribosyl)-ATP (PR-ATP). Has a crucial role in the pathway because the rate of histidine biosynthesis seems to be controlled primarily by regulation of HisG enzymatic activity. The sequence is that of ATP phosphoribosyltransferase (hisG) from Pasteurella multocida (strain Pm70).